The following is a 239-amino-acid chain: Tetraspanin-9 (239 aa).

Residues 1–13 (MARGCLCCLKYMM) lie on the Cytoplasmic side of the membrane. Residues 14–34 (FLFNLIFWLCGCGLLGVGIWL) traverse the membrane as a helical segment. The Extracellular segment spans residues 35–55 (SVSQGNFATFSPSFPSLSAAN). A helical transmembrane segment spans residues 56 to 76 (LVIAIGTIVMVTGFLGCLGAI). Over 77–85 (KENKCLLLS) the chain is Cytoplasmic. Residues 86-106 (FFIVLLVILLAELILLILFFV) form a helical membrane-spanning segment. The Extracellular portion of the chain corresponds to 107–203 (YMDKVNENAK…VKMWFDDNKH (97 aa)). Asparagine 180 carries an N-linked (GlcNAc...) asparagine glycan. Residues 204-224 (VLGTVGMCILIMQILGMAFSM) traverse the membrane as a helical segment. The Cytoplasmic segment spans residues 225 to 239 (TLFQHIHRTGKKYDA).

This sequence belongs to the tetraspanin (TM4SF) family. In terms of assembly, found in a complex with GP6. Glycosylated. In terms of tissue distribution, expressed in megakaryocytes and platelets (at protein level).

It is found in the membrane. The sequence is that of Tetraspanin-9 (TSPAN9) from Homo sapiens (Human).